The sequence spans 239 residues: Terpene cyclase idtB (239 aa).

The next 5 membrane-spanning stretches (helical) occupy residues 20–40, 50–70, 75–95, 113–133, and 138–158; these read MADT…ALMI, CMAL…TIVY, RVEL…MVGA, AGFI…ALAM, and GLAY…GGLF. Asn164 is a glycosylation site (N-linked (GlcNAc...) asparagine). A helical transmembrane segment spans residues 197–217; the sequence is EVFGWLASPLVLWSLVTFLLA.

This sequence belongs to the paxB family.

It localises to the membrane. It functions in the pathway secondary metabolite biosynthesis. Terpene cyclase; part of the gene cluster that mediates the biosynthesis of paspalitrems, indole-diterpene (IDT) mycotoxins that are potent tremorgens in mammals. The geranylgeranyl diphosphate (GGPP) synthase idtG is proposed to catalyze the first step in IDT biosynthesis via catalysis of a series of iterative condensations of isopentenyl diphosphate (IPP) with dimethylallyl diphosphate (DMAPP), geranyl diphosphate (GPP), and farnesyl diphosphate (FPP), to form GGPP. Condensation of indole-3-glycerol phosphate with GGPP by the prenyltransferase idtC then forms 3-geranylgeranylindole (3-GGI). Epoxidation of the two terminal alkenes of the geranylgeranyl moiety by the FAD-dependent monooxygenase idtM, and cyclization by the terpene cyclase idtB then leads to the production of paspaline. The cytochrome P450 monooxygenase idtP then catalyzes oxidative elimination of the pendant methyl group at C-12 of paspaline and generates the C-10 ketone to yield 13-desoxypaxilline. The cytochrome P450 monooxygenase idtQ may catalyze the C-13 oxidation of 13-desoxypaxilline to afford paxilline. Considering that both paspalicine and paxilline were detected in C.paspali, idtQ also catalyzes the formation of paspalinine from 13-desoxypaxilline via paspalicine as an intermediate. Finally, the alpha-prenyltransferase idtF prenylates paspalinine at the C-20 or the C-21 positions to yield paspalitrems A and C, respectively. The hydroxylation of paspalitrem A at C-32 by a still unknown oxidase affords paspalitrem B. The polypeptide is Terpene cyclase idtB (Claviceps paspali (Rye ergot fungus)).